Consider the following 151-residue polypeptide: UPF0756 membrane protein Hore_21770 (151 aa).

5 helical membrane-spanning segments follow: residues 7-29 (LLII…GLLL), 49-69 (IEIG…LSPV), 84-104 (TVAI…LDLL), 110-130 (FILG…GIPV), and 131-151 (GPLM…IIKG).

It belongs to the UPF0756 family.

It localises to the cell membrane. This chain is UPF0756 membrane protein Hore_21770, found in Halothermothrix orenii (strain H 168 / OCM 544 / DSM 9562).